The chain runs to 234 residues: 2-C-methyl-D-erythritol 4-phosphate cytidylyltransferase (234 aa).

The protein belongs to the IspD/TarI cytidylyltransferase family. IspD subfamily.

The enzyme catalyses 2-C-methyl-D-erythritol 4-phosphate + CTP + H(+) = 4-CDP-2-C-methyl-D-erythritol + diphosphate. Its pathway is isoprenoid biosynthesis; isopentenyl diphosphate biosynthesis via DXP pathway; isopentenyl diphosphate from 1-deoxy-D-xylulose 5-phosphate: step 2/6. Functionally, catalyzes the formation of 4-diphosphocytidyl-2-C-methyl-D-erythritol from CTP and 2-C-methyl-D-erythritol 4-phosphate (MEP). In Thermosynechococcus vestitus (strain NIES-2133 / IAM M-273 / BP-1), this protein is 2-C-methyl-D-erythritol 4-phosphate cytidylyltransferase.